Reading from the N-terminus, the 160-residue chain is SsrA-binding protein (160 aa).

Belongs to the SmpB family.

The protein localises to the cytoplasm. Functionally, required for rescue of stalled ribosomes mediated by trans-translation. Binds to transfer-messenger RNA (tmRNA), required for stable association of tmRNA with ribosomes. tmRNA and SmpB together mimic tRNA shape, replacing the anticodon stem-loop with SmpB. tmRNA is encoded by the ssrA gene; the 2 termini fold to resemble tRNA(Ala) and it encodes a 'tag peptide', a short internal open reading frame. During trans-translation Ala-aminoacylated tmRNA acts like a tRNA, entering the A-site of stalled ribosomes, displacing the stalled mRNA. The ribosome then switches to translate the ORF on the tmRNA; the nascent peptide is terminated with the 'tag peptide' encoded by the tmRNA and targeted for degradation. The ribosome is freed to recommence translation, which seems to be the essential function of trans-translation. The sequence is that of SsrA-binding protein from Zymomonas mobilis subsp. mobilis (strain ATCC 31821 / ZM4 / CP4).